A 127-amino-acid polypeptide reads, in one-letter code: MARISGVDIPRNKRVEISLTYIYGIGRTTSTEILARTNINPNVRVKDLTEDEVIRLREIIDQDYTVEGDLRRAVQLNIKRLMDIGCYRGIRHRKGLPLRGQRTKTNARTRRGKKGAAIGGKKKATKK.

The disordered stretch occupies residues 95–127; sequence GLPLRGQRTKTNARTRRGKKGAAIGGKKKATKK.

Belongs to the universal ribosomal protein uS13 family. In terms of assembly, part of the 30S ribosomal subunit. Forms a loose heterodimer with protein S19. Forms two bridges to the 50S subunit in the 70S ribosome.

Functionally, located at the top of the head of the 30S subunit, it contacts several helices of the 16S rRNA. In the 70S ribosome it contacts the 23S rRNA (bridge B1a) and protein L5 of the 50S subunit (bridge B1b), connecting the 2 subunits; these bridges are implicated in subunit movement. Contacts the tRNAs in the A and P-sites. This chain is Small ribosomal subunit protein uS13, found in Herpetosiphon aurantiacus (strain ATCC 23779 / DSM 785 / 114-95).